Reading from the N-terminus, the 238-residue chain is Endonuclease V (238 aa).

2 residues coordinate Mg(2+): D46 and D116.

Belongs to the endonuclease V family. Requires Mg(2+) as cofactor.

The protein localises to the cytoplasm. The enzyme catalyses Endonucleolytic cleavage at apurinic or apyrimidinic sites to products with a 5'-phosphate.. In terms of biological role, DNA repair enzyme involved in the repair of deaminated bases. Selectively cleaves double-stranded DNA at the second phosphodiester bond 3' to a deoxyinosine leaving behind the intact lesion on the nicked DNA. The sequence is that of Endonuclease V from Bacillus subtilis (strain 168).